The chain runs to 508 residues: Aldehyde dehydrogenase family 7 member A1 (508 aa).

244-249 (GSSKVG) lines the NAD(+) pocket. The Proton acceptor role is filled by glutamate 266. The Nucleophile role is filled by cysteine 300.

The protein belongs to the aldehyde dehydrogenase family. As to quaternary structure, homotetramer.

The catalysed reaction is an aldehyde + NAD(+) + H2O = a carboxylate + NADH + 2 H(+). The protein is Aldehyde dehydrogenase family 7 member A1 of Pisum sativum (Garden pea).